The sequence spans 205 residues: High frequency lysogenization protein HflD homolog (205 aa).

It belongs to the HflD family.

The protein localises to the cytoplasm. It is found in the cell inner membrane. This is High frequency lysogenization protein HflD homolog from Shewanella sp. (strain ANA-3).